The primary structure comprises 71 residues: Putative defensin-like protein 303 (71 aa).

A signal peptide spans M1 to S25. Disulfide bonds link C27-C45, C33-C50, and C39-C52.

The protein belongs to the DEFL family.

Its subcellular location is the secreted. In Arabidopsis thaliana (Mouse-ear cress), this protein is Putative defensin-like protein 303.